Here is a 77-residue protein sequence, read N- to C-terminus: Exodeoxyribonuclease 7 small subunit (77 aa).

Belongs to the XseB family. In terms of assembly, heterooligomer composed of large and small subunits.

The protein resides in the cytoplasm. The enzyme catalyses Exonucleolytic cleavage in either 5'- to 3'- or 3'- to 5'-direction to yield nucleoside 5'-phosphates.. Bidirectionally degrades single-stranded DNA into large acid-insoluble oligonucleotides, which are then degraded further into small acid-soluble oligonucleotides. The sequence is that of Exodeoxyribonuclease 7 small subunit from Carboxydothermus hydrogenoformans (strain ATCC BAA-161 / DSM 6008 / Z-2901).